A 486-amino-acid polypeptide reads, in one-letter code: Probable cytosol aminopeptidase (486 aa).

Positions 256 and 261 each coordinate Mn(2+). Lys268 is a catalytic residue. Mn(2+)-binding residues include Asp280, Asp339, and Glu341. Residue Arg343 is part of the active site.

It belongs to the peptidase M17 family. Mn(2+) is required as a cofactor.

The protein localises to the cytoplasm. It catalyses the reaction Release of an N-terminal amino acid, Xaa-|-Yaa-, in which Xaa is preferably Leu, but may be other amino acids including Pro although not Arg or Lys, and Yaa may be Pro. Amino acid amides and methyl esters are also readily hydrolyzed, but rates on arylamides are exceedingly low.. It carries out the reaction Release of an N-terminal amino acid, preferentially leucine, but not glutamic or aspartic acids.. Presumably involved in the processing and regular turnover of intracellular proteins. Catalyzes the removal of unsubstituted N-terminal amino acids from various peptides. This chain is Probable cytosol aminopeptidase, found in Synechococcus sp. (strain ATCC 27144 / PCC 6301 / SAUG 1402/1) (Anacystis nidulans).